A 96-amino-acid chain; its full sequence is Putative defensin-like protein 236 (96 aa).

A signal peptide spans 1–23; the sequence is MKNATSLIIYCFLMFLLMNNVKG. 4 cysteine pairs are disulfide-bonded: Cys31–Cys93, Cys41–Cys70, Cys49–Cys83, and Cys68–Cys85.

The protein belongs to the DEFL family.

It is found in the secreted. The sequence is that of Putative defensin-like protein 236 (SCRL20) from Arabidopsis thaliana (Mouse-ear cress).